The chain runs to 211 residues: Protein crossbronx-like (211 aa).

The 161-residue stretch at 17–177 (NQGYQILAEY…VRNSILWSCK (161 aa)) folds into the UBC core domain.

This sequence belongs to the ubiquitin-conjugating enzyme family. FTS subfamily.

In Drosophila grimshawi (Hawaiian fruit fly), this protein is Protein crossbronx-like.